The sequence spans 179 residues: Large ribosomal subunit protein uL5 (179 aa).

The protein belongs to the universal ribosomal protein uL5 family. Part of the 50S ribosomal subunit; part of the 5S rRNA/L5/L18/L25 subcomplex. Contacts the 5S rRNA and the P site tRNA. Forms a bridge to the 30S subunit in the 70S ribosome.

In terms of biological role, this is one of the proteins that bind and probably mediate the attachment of the 5S RNA into the large ribosomal subunit, where it forms part of the central protuberance. In the 70S ribosome it contacts protein S13 of the 30S subunit (bridge B1b), connecting the 2 subunits; this bridge is implicated in subunit movement. Contacts the P site tRNA; the 5S rRNA and some of its associated proteins might help stabilize positioning of ribosome-bound tRNAs. This is Large ribosomal subunit protein uL5 from Paraburkholderia phymatum (strain DSM 17167 / CIP 108236 / LMG 21445 / STM815) (Burkholderia phymatum).